We begin with the raw amino-acid sequence, 102 residues long: 10 kDa heat shock protein, mitochondrial (102 aa).

The residue at position 2 (Ala-2) is an N-acetylalanine. Lys-8 is modified (N6-acetyllysine). At Lys-28 the chain carries N6-succinyllysine. Lys-40 carries the N6-acetyllysine; alternate modification. 3 positions are modified to N6-malonyllysine; alternate: Lys-40, Lys-54, and Lys-56. N6-succinyllysine; alternate occurs at positions 40, 54, and 56. At Lys-56 the chain carries N6-acetyllysine; alternate. Residue Ser-57 is modified to Phosphoserine. Residues Lys-66 and Lys-70 each carry the N6-acetyllysine; alternate modification. Residues Lys-66 and Lys-70 each carry the N6-succinyllysine; alternate modification. Thr-79 carries the phosphothreonine modification. N6-acetyllysine; alternate occurs at positions 80 and 86. Lys-80 and Lys-86 each carry N6-succinyllysine; alternate. Lys-99 bears the N6-acetyllysine mark.

Belongs to the GroES chaperonin family. In terms of assembly, homoheptamer arranged in a ring structure. 2 heptameric Hsp10 rings interact with a Hsp60 tetradecamer in the structure of a back-to-back double heptameric ring to form the symmetrical football complex.

The protein localises to the mitochondrion matrix. Functionally, co-chaperonin implicated in mitochondrial protein import and macromolecular assembly. Together with Hsp60, facilitates the correct folding of imported proteins. May also prevent misfolding and promote the refolding and proper assembly of unfolded polypeptides generated under stress conditions in the mitochondrial matrix. The functional units of these chaperonins consist of heptameric rings of the large subunit Hsp60, which function as a back-to-back double ring. In a cyclic reaction, Hsp60 ring complexes bind one unfolded substrate protein per ring, followed by the binding of ATP and association with 2 heptameric rings of the co-chaperonin Hsp10. This leads to sequestration of the substrate protein in the inner cavity of Hsp60 where, for a certain period of time, it can fold undisturbed by other cell components. Synchronous hydrolysis of ATP in all Hsp60 subunits results in the dissociation of the chaperonin rings and the release of ADP and the folded substrate protein. In Mus musculus (Mouse), this protein is 10 kDa heat shock protein, mitochondrial (Hspe1).